The primary structure comprises 659 residues: Threonine--tRNA ligase (659 aa).

One can recognise a TGS domain in the interval 7–70 (VQATVTVTFP…TDDATVEIIT (64 aa)). The interval 255–557 (DHRKLGAELE…LIEHTAGNFP (303 aa)) is catalytic. Zn(2+) contacts are provided by Cys353, His404, and His534.

The protein belongs to the class-II aminoacyl-tRNA synthetase family. As to quaternary structure, homodimer. Requires Zn(2+) as cofactor.

It localises to the cytoplasm. It carries out the reaction tRNA(Thr) + L-threonine + ATP = L-threonyl-tRNA(Thr) + AMP + diphosphate + H(+). Catalyzes the attachment of threonine to tRNA(Thr) in a two-step reaction: L-threonine is first activated by ATP to form Thr-AMP and then transferred to the acceptor end of tRNA(Thr). Also edits incorrectly charged L-seryl-tRNA(Thr). This Chlorobium phaeobacteroides (strain BS1) protein is Threonine--tRNA ligase.